The following is a 381-amino-acid chain: Chaperone protein DnaJ (381 aa).

Residues Asp5–Gly70 form the J domain. Residues Gly136 to Glu214 form a CR-type zinc finger. Residues Cys149, Cys152, Cys166, Cys169, Cys188, Cys191, Cys202, and Cys205 each contribute to the Zn(2+) site. CXXCXGXG motif repeat units follow at residues Cys149 to Gly156, Cys166 to Gly173, Cys188 to Gly195, and Cys202 to Gly209.

It belongs to the DnaJ family. In terms of assembly, homodimer. It depends on Zn(2+) as a cofactor.

Its subcellular location is the cytoplasm. Functionally, participates actively in the response to hyperosmotic and heat shock by preventing the aggregation of stress-denatured proteins and by disaggregating proteins, also in an autonomous, DnaK-independent fashion. Unfolded proteins bind initially to DnaJ; upon interaction with the DnaJ-bound protein, DnaK hydrolyzes its bound ATP, resulting in the formation of a stable complex. GrpE releases ADP from DnaK; ATP binding to DnaK triggers the release of the substrate protein, thus completing the reaction cycle. Several rounds of ATP-dependent interactions between DnaJ, DnaK and GrpE are required for fully efficient folding. Also involved, together with DnaK and GrpE, in the DNA replication of plasmids through activation of initiation proteins. This is Chaperone protein DnaJ from Azorhizobium caulinodans (strain ATCC 43989 / DSM 5975 / JCM 20966 / LMG 6465 / NBRC 14845 / NCIMB 13405 / ORS 571).